The sequence spans 109 residues: Cell division protein ZapA (109 aa).

Positions 21–99 (PEQRDALNQA…IEQALLEQGR (79 aa)) form a coiled coil.

The protein belongs to the ZapA family. Type 1 subfamily. In terms of assembly, homodimer. Interacts with FtsZ.

Its subcellular location is the cytoplasm. Its function is as follows. Activator of cell division through the inhibition of FtsZ GTPase activity, therefore promoting FtsZ assembly into bundles of protofilaments necessary for the formation of the division Z ring. It is recruited early at mid-cell but it is not essential for cell division. The chain is Cell division protein ZapA from Klebsiella pneumoniae subsp. pneumoniae (strain ATCC 700721 / MGH 78578).